A 423-amino-acid chain; its full sequence is Protein SOSEKI 5 (423 aa).

Residues 1–33 (MSSRVFRATPDNNYLVPRRSKDQQDTSPDRNRI) form a disordered region. Residues 19–33 (RSKDQQDTSPDRNRI) are compositionally biased toward basic and acidic residues. The segment at 45–136 (RKVPVVYYLC…YVLKGSEVLD (92 aa)) is DIX-like oligomerization domain. Disordered regions lie at residues 150-172 (SSFRDPRSLNPDKNSGDDIPAVI) and 196-258 (SSAE…SPET). Over residues 196–211 (SSAESTQRLAADASTQ) the composition is skewed to polar residues. Short sequence motifs (association to cell membranes) lie at residues 233–234 (AS) and 303–304 (CG). Positions 379-423 (SSSYNADRCSRMGPTTEKDEEEAVRAKCIPRKPKPVAKRNNGGQQ) are disordered. The span at 406-415 (CIPRKPKPVA) shows a compositional bias: basic residues.

Belongs to the SOSEKI family. Homodimer. Forms long polymer filaments with other SOKs proteins polymers (e.g. SOK1, SOK2, SOK3 and SOK4) crucial for polar localization and biological activity. Binds to ANGUSTIFOLIA (AN). Expressed during embryogenesis and in roots.

It is found in the cell membrane. In terms of biological role, SOSEKI proteins (SOK1-5) locally interpret global polarity cues and can influence cell division orientation to coordinate cell polarization relative to body axes. The chain is Protein SOSEKI 5 from Arabidopsis thaliana (Mouse-ear cress).